A 132-amino-acid polypeptide reads, in one-letter code: Small ribosomal subunit protein uS8 (132 aa).

Belongs to the universal ribosomal protein uS8 family. As to quaternary structure, part of the 30S ribosomal subunit. Contacts proteins S5 and S12.

In terms of biological role, one of the primary rRNA binding proteins, it binds directly to 16S rRNA central domain where it helps coordinate assembly of the platform of the 30S subunit. This chain is Small ribosomal subunit protein uS8, found in Clostridium botulinum (strain ATCC 19397 / Type A).